A 300-amino-acid chain; its full sequence is Junctional adhesion molecule A (300 aa).

Residues 1–26 (MGTEGKAGRKLLFLFTSMILGSLVQG) form the signal peptide. Residues 27-238 (KGSVYTAQSD…MDAVELNVGG (212 aa)) lie on the Extracellular side of the membrane. 2 consecutive Ig-like V-type domains span residues 28 to 122 (GSVY…GEVS) and 134 to 230 (PTIS…AHMD). A glycan (N-linked (GlcNAc...) asparagine) is linked at N42. 2 disulfide bridges follow: C49–C108 and C152–C212. A glycan (N-linked (GlcNAc...) asparagine) is linked at N185. A helical membrane pass occupies residues 239–259 (IVAAVLVTLILLGLLIFGVWF). The Cytoplasmic segment spans residues 260–299 (AYSRGYFERTKKGTAPGKKVIYSQPSTRSEGEFKQTSSFL). Residues S282, S285, and S288 each carry the phosphoserine modification.

The protein belongs to the immunoglobulin superfamily. Interacts with the ninth PDZ domain of MPDZ. Interacts with the first PDZ domain of PARD3. The association between PARD3 and PARD6B probably disrupts this interaction. Interacts with ITGAL (via I-domain). Interacts with CD151.

Its subcellular location is the cell junction. It is found in the tight junction. The protein resides in the cell membrane. Its function is as follows. Seems to play a role in epithelial tight junction formation. Appears early in primordial forms of cell junctions and recruits PARD3. The association of the PARD6-PARD3 complex may prevent the interaction of PARD3 with JAM1, thereby preventing tight junction assembly. Plays a role in regulating monocyte transmigration involved in integrity of epithelial barrier. Ligand for integrin alpha-L/beta-2 involved in memory T-cell and neutrophil transmigration. Involved in platelet activation. The protein is Junctional adhesion molecule A (F11r) of Mus musculus (Mouse).